A 185-amino-acid chain; its full sequence is Elongation factor P (185 aa).

It belongs to the elongation factor P family.

Its subcellular location is the cytoplasm. Its pathway is protein biosynthesis; polypeptide chain elongation. Involved in peptide bond synthesis. Stimulates efficient translation and peptide-bond synthesis on native or reconstituted 70S ribosomes in vitro. Probably functions indirectly by altering the affinity of the ribosome for aminoacyl-tRNA, thus increasing their reactivity as acceptors for peptidyl transferase. The sequence is that of Elongation factor P from Acetivibrio thermocellus (strain ATCC 27405 / DSM 1237 / JCM 9322 / NBRC 103400 / NCIMB 10682 / NRRL B-4536 / VPI 7372) (Clostridium thermocellum).